The following is a 437-amino-acid chain: Phosphomethylpyrimidine synthase (437 aa).

Substrate contacts are provided by residues Asn-69, Met-98, Tyr-127, His-163, 185–187 (SRG), 226–229 (DACR), and Glu-265. His-269 contacts Zn(2+). Residue Tyr-292 coordinates substrate. His-333 is a Zn(2+) binding site. [4Fe-4S] cluster is bound by residues Cys-409, Cys-412, and Cys-416.

This sequence belongs to the ThiC family. Requires [4Fe-4S] cluster as cofactor.

It catalyses the reaction 5-amino-1-(5-phospho-beta-D-ribosyl)imidazole + S-adenosyl-L-methionine = 4-amino-2-methyl-5-(phosphooxymethyl)pyrimidine + CO + 5'-deoxyadenosine + formate + L-methionine + 3 H(+). Its pathway is cofactor biosynthesis; thiamine diphosphate biosynthesis. Its function is as follows. Catalyzes the synthesis of the hydroxymethylpyrimidine phosphate (HMP-P) moiety of thiamine from aminoimidazole ribotide (AIR) in a radical S-adenosyl-L-methionine (SAM)-dependent reaction. In Clostridium botulinum (strain Okra / Type B1), this protein is Phosphomethylpyrimidine synthase.